The primary structure comprises 67 residues: Large ribosomal subunit protein bL35 (67 aa).

The protein belongs to the bacterial ribosomal protein bL35 family.

The sequence is that of Large ribosomal subunit protein bL35 from Bartonella quintana (strain Toulouse) (Rochalimaea quintana).